The primary structure comprises 866 residues: Rifampicin phosphotransferase (866 aa).

An ATP-binding region spans residues Met-1–Thr-313. The ATP site is built by Lys-22, Arg-116, Gly-131, Thr-135, Gln-182, Glu-296, Gln-308, and Arg-310. The tract at residues Asn-326–Glu-754 is rifampicin-binding. The disordered stretch occupies residues Ile-410–Gln-429. The swivel phosphohistidine stretch occupies residues Gly-767–Ile-865. Residue His-825 is the Tele-phosphohistidine intermediate of the active site.

This sequence belongs to the rifampicin phosphotransferase family.

The enzyme catalyses rifampicin + ATP + H2O = 21-phosphorifampicin + AMP + phosphate + 2 H(+). Its function is as follows. Catalyzes the phosphorylation of rifampicin, also known as rifampin (RIF), leading to its inactivation. The chain is Rifampicin phosphotransferase from Bacillus subtilis (strain 168).